Consider the following 270-residue polypeptide: Myelin protein zero-like protein 1 (270 aa).

The N-terminal stretch at 1–35 (MAEAVGAVALIAAPARRRWLWSVLAAMLGLLTARI) is a signal peptide. In terms of domain architecture, Ig-like V-type spans 36-151 (SALEVHTPKE…DIVVRPGHIR (116 aa)). Residues 36 to 162 (SALEVHTPKE…HVVEIDNLLV (127 aa)) are Extracellular-facing. N-linked (GlcNAc...) asparagine glycosylation is found at N50 and N130. C58 and C135 are joined by a disulfide. Residues 163–183 (FLVWVVVGTVTAVVLGLTLLI) form a helical membrane-spanning segment. At 184–270 (SLVLVVLYRR…SVVYADIRKD (87 aa)) the chain is on the cytoplasmic side. The segment at 201-257 (TGCSTSERLSPVKQAPRKCPSDTEGLVKSPPSAGSHQGPVIYAQLDHSGGHHSGKIN) is disordered. 4 positions are modified to phosphoserine: S204, S206, S210, and S221. Positions 240 to 245 (VIYAQL) match the ITIM motif 1 motif. Y242 is subject to Phosphotyrosine. At S261 the chain carries Phosphoserine. Positions 262–267 (VVYADI) match the ITIM motif 2 motif. At Y264 the chain carries Phosphotyrosine.

Belongs to the myelin P0 protein family. Interacts with phosphorylated PTPN11/SHP-2. In terms of processing, phosphorylated on tyrosine residues upon stimulation with pervanadate and concanavalin-A (ConA). Phosphorylation at Tyr-242 and Tyr-264 is required for interaction with PTPN11/SHP-2. Dephosphorylated by PTPN11/SHP-2 (in vitro).

It localises to the membrane. Cell surface receptor, which is involved in signal transduction processes. Recruits PTPN11/SHP-2 to the cell membrane and is a putative substrate of PTPN11/SHP-2. Is a major receptor for concanavalin-A (ConA) and is involved in cellular signaling induced by ConA, which probably includes Src family tyrosine-protein kinases. Isoform 2 seems to have a dominant negative role; it blocks tyrosine phosphorylation of MPZL1 induced by ConA. Isoform 1, but not isoform 2, may be involved in regulation of integrin-mediated cell motility. This chain is Myelin protein zero-like protein 1 (Mpzl1), found in Mus musculus (Mouse).